A 554-amino-acid polypeptide reads, in one-letter code: Wee1-like protein kinase 2-B (554 aa).

Disordered regions lie at residues 1–86 (MRMA…GGEC) and 145–182 (TLVN…DSQM). Serine 38 carries the phosphoserine modification. Polar residues-rich tracts occupy residues 38-48 (SPVSSWRTNNC) and 147-163 (VNVN…THFQ). The 275-residue stretch at 213 to 487 (FLEIEKIGAG…AKNSVLRRCV (275 aa)) folds into the Protein kinase domain. Residues 219 to 227 (IGAGEFGSV) and lysine 242 each bind ATP. Catalysis depends on aspartate 340, which acts as the Proton acceptor. Residues asparagine 345 and aspartate 377 each coordinate Mg(2+). The stretch at 490 to 516 (AAELQKQLNVEKFKTAMLERELQAAKL) forms a coiled coil.

The protein belongs to the protein kinase superfamily. Ser/Thr protein kinase family. WEE1 subfamily. Interacts with cdca3. In terms of processing, ubiquitinated and degraded at the onset of G2/M phase. Phosphorylated during M and G1 phases. Interacts with cdca3 when phosphorylated at Ser-38.

It localises to the nucleus. It carries out the reaction L-tyrosyl-[protein] + ATP = O-phospho-L-tyrosyl-[protein] + ADP + H(+). Its function is as follows. Oocyte and early embryo-specific protein tyrosine kinase that phosphorylates and inhibits cdk1 and acts as a regulator of meiosis in oocytes. Required to ensure the meiotic cell cycle in oocytes by phosphorylating cdk1 at 'Tyr-15', leading to inhibit cdk1 activity and prevent meiosis. In Xenopus laevis (African clawed frog), this protein is Wee1-like protein kinase 2-B (wee2-b).